Here is a 300-residue protein sequence, read N- to C-terminus: tRNA pseudouridine synthase A (300 aa).

D67 (nucleophile) is an active-site residue. Substrate is bound at residue Y125.

Belongs to the tRNA pseudouridine synthase TruA family. Homodimer.

The catalysed reaction is uridine(38/39/40) in tRNA = pseudouridine(38/39/40) in tRNA. Formation of pseudouridine at positions 38, 39 and 40 in the anticodon stem and loop of transfer RNAs. The chain is tRNA pseudouridine synthase A from Synechococcus sp. (strain CC9902).